The sequence spans 296 residues: Aspartate carbamoyltransferase catalytic subunit (296 aa).

R50 and T51 together coordinate carbamoyl phosphate. K79 provides a ligand contact to L-aspartate. Carbamoyl phosphate is bound by residues R100, H128, and Q131. L-aspartate is bound by residues R161 and R219. Positions 258 and 259 each coordinate carbamoyl phosphate.

This sequence belongs to the aspartate/ornithine carbamoyltransferase superfamily. ATCase family. In terms of assembly, heterooligomer of catalytic and regulatory chains.

The enzyme catalyses carbamoyl phosphate + L-aspartate = N-carbamoyl-L-aspartate + phosphate + H(+). It participates in pyrimidine metabolism; UMP biosynthesis via de novo pathway; (S)-dihydroorotate from bicarbonate: step 2/3. In terms of biological role, catalyzes the condensation of carbamoyl phosphate and aspartate to form carbamoyl aspartate and inorganic phosphate, the committed step in the de novo pyrimidine nucleotide biosynthesis pathway. This Korarchaeum cryptofilum (strain OPF8) protein is Aspartate carbamoyltransferase catalytic subunit.